Here is a 385-residue protein sequence, read N- to C-terminus: Trans-enoyl reductase poxH (385 aa).

NADP(+) is bound at residue 64–67 (QPYS). A substrate-binding site is contributed by 156–163 (PDPAAPPI). NADP(+) is bound by residues 199 to 202 (STSV), 223 to 226 (SGTD), Y241, and 289 to 290 (LG). 309–313 (HMAPL) contacts substrate. 372–373 (KR) contributes to the NADP(+) binding site.

This sequence belongs to the zinc-containing alcohol dehydrogenase family. Monomer.

Its pathway is secondary metabolite biosynthesis. Functionally, trans-enoyl reductase; part of the gene cluster that mediates the biosynthesis of oxaleimides, cytotoxic compounds containing an unusual disubstituted succinimide moiety. The first step of the pathway is provided by the HR-PKS poxF that serves in a new mode of collaborative biosynthesis with the PKS-NRPS poxE, by providing the olefin containing amino acid substrate via the synthesis of an ACP-bound dec-4-enoate. The cytochrome P450 monooxygenase poxM-catalyzed oxidation at the alpha-position creates the enzyme-bound 2-hydroxydec-4-enoyl-ACP thioester, which may be prone to spontaneous hydrolysis to yield 2-hydroxydec-4-enoic acid due to increased electrophilicity of the carbonyl. 2-hydroxydec-4-enoic acid can then be further oxidized by poxM to yield the alpha-ketoacid 2-oxodec-4-enoicacid, which is reductively aminated by the aminotransferase poxL to yield (S,E)-2-aminodec-4-enoic acid. The Hybrid PKS-NRPS synthetase poxE then performs condensation between the octaketide product of its PKS modules and the amino group of (S,E)-2-aminodec-4-enoic acid which is activated and incorporated by the adenylation domain. The resulting aminoacyl product can be cyclized by the Diels-Alderase PoxQ and reductively released by the reductive (R) domain of poxE to yield an aldehyde intermediate. The released aldehyde is then substrate for a Knoevenagel condensation by the hydrolyase poxO followed by an oxidation at the 5-position of the pyrrolidone ring. The presence of the olefin from the amino acid building block allows for migration of the substituted allyl group to occur. This allylic transposition reaction takes place in a conjugate addition, semipinacol-like fashion to yield a succinimide intermediate. Iterative two-electron oxidations of the C7 methyl of the succinimide intermediate to the carboxylic acid can be catalyzed by one of two remaining cytochrome P450 monooxygenasess poxC or poxD to yield oxaleimide A. Subsequent oxidation yields the maleimide scaffold oxaleimide I. Both oxaleimide A and oxaleimide I can undergo oxidative modifications in the decalin ring to yield the series of products oxaleimides B to H. In Penicillium oxalicum (strain 114-2 / CGMCC 5302) (Penicillium decumbens), this protein is Trans-enoyl reductase poxH.